Consider the following 512-residue polypeptide: Apolipoprotein N-acyltransferase (512 aa).

The next 6 membrane-spanning stretches (helical) occupy residues 5-25 (LDKYWQHPALYWPLLILFAAA), 56-76 (FAVSSAYLFGLTAYTTQFYWI), 92-112 (VPLTFLLPAYLALYPALCFWL), 118-138 (LPRGIKIGLVLPILWTLTEFA), 168-188 (FGGIHMVTLATAFLGVWLVLA), and 195-215 (SGKRLLPIILIAALLAAGYTA). The region spanning 233-477 (LQGNIDQTLK…ETVLEGHIKG (245 aa)) is the CN hydrolase domain. Glu271 (proton acceptor) is an active-site residue. Lys337 is a catalytic residue. Cys389 serves as the catalytic Nucleophile. Residues 487 to 507 (TGSSWWLMGILTLAALILFIF) traverse the membrane as a helical segment.

Belongs to the CN hydrolase family. Apolipoprotein N-acyltransferase subfamily.

It localises to the cell inner membrane. It catalyses the reaction N-terminal S-1,2-diacyl-sn-glyceryl-L-cysteinyl-[lipoprotein] + a glycerophospholipid = N-acyl-S-1,2-diacyl-sn-glyceryl-L-cysteinyl-[lipoprotein] + a 2-acyl-sn-glycero-3-phospholipid + H(+). Its pathway is protein modification; lipoprotein biosynthesis (N-acyl transfer). Catalyzes the phospholipid dependent N-acylation of the N-terminal cysteine of apolipoprotein, the last step in lipoprotein maturation. This is Apolipoprotein N-acyltransferase from Neisseria meningitidis serogroup A / serotype 4A (strain DSM 15465 / Z2491).